The chain runs to 141 residues: Nucleoside diphosphate kinase (141 aa).

Lys-9, Phe-57, Arg-85, Thr-91, Arg-102, and Asn-112 together coordinate ATP. His-115 (pros-phosphohistidine intermediate) is an active-site residue.

Belongs to the NDK family. As to quaternary structure, homotetramer. The cofactor is Mg(2+).

The protein localises to the cytoplasm. The catalysed reaction is a 2'-deoxyribonucleoside 5'-diphosphate + ATP = a 2'-deoxyribonucleoside 5'-triphosphate + ADP. The enzyme catalyses a ribonucleoside 5'-diphosphate + ATP = a ribonucleoside 5'-triphosphate + ADP. Major role in the synthesis of nucleoside triphosphates other than ATP. The ATP gamma phosphate is transferred to the NDP beta phosphate via a ping-pong mechanism, using a phosphorylated active-site intermediate. This Chlamydia felis (strain Fe/C-56) (Chlamydophila felis) protein is Nucleoside diphosphate kinase.